The sequence spans 207 residues: Urease accessory protein UreG (207 aa).

Residue 12-19 coordinates GTP; the sequence is GPVGAGKT.

The protein belongs to the SIMIBI class G3E GTPase family. UreG subfamily. Homodimer. UreD, UreF and UreG form a complex that acts as a GTP-hydrolysis-dependent molecular chaperone, activating the urease apoprotein by helping to assemble the nickel containing metallocenter of UreC. The UreE protein probably delivers the nickel.

The protein localises to the cytoplasm. Functionally, facilitates the functional incorporation of the urease nickel metallocenter. This process requires GTP hydrolysis, probably effectuated by UreG. The sequence is that of Urease accessory protein UreG from Cereibacter sphaeroides (strain ATCC 17025 / ATH 2.4.3) (Rhodobacter sphaeroides).